A 314-amino-acid polypeptide reads, in one-letter code: 4-hydroxy-3-methylbut-2-enyl diphosphate reductase (314 aa).

Cysteine 12 contributes to the [4Fe-4S] cluster binding site. Residues histidine 43 and histidine 81 each contribute to the (2E)-4-hydroxy-3-methylbut-2-enyl diphosphate site. 2 residues coordinate dimethylallyl diphosphate: histidine 43 and histidine 81. 2 residues coordinate isopentenyl diphosphate: histidine 43 and histidine 81. A [4Fe-4S] cluster-binding site is contributed by cysteine 103. Histidine 131 lines the (2E)-4-hydroxy-3-methylbut-2-enyl diphosphate pocket. Position 131 (histidine 131) interacts with dimethylallyl diphosphate. Histidine 131 contributes to the isopentenyl diphosphate binding site. Glutamate 133 (proton donor) is an active-site residue. (2E)-4-hydroxy-3-methylbut-2-enyl diphosphate is bound at residue threonine 170. Cysteine 198 serves as a coordination point for [4Fe-4S] cluster. (2E)-4-hydroxy-3-methylbut-2-enyl diphosphate contacts are provided by serine 226, asparagine 228, and serine 271. Residues serine 226, asparagine 228, and serine 271 each contribute to the dimethylallyl diphosphate site. Positions 226, 228, and 271 each coordinate isopentenyl diphosphate.

This sequence belongs to the IspH family. It depends on [4Fe-4S] cluster as a cofactor.

It carries out the reaction isopentenyl diphosphate + 2 oxidized [2Fe-2S]-[ferredoxin] + H2O = (2E)-4-hydroxy-3-methylbut-2-enyl diphosphate + 2 reduced [2Fe-2S]-[ferredoxin] + 2 H(+). The enzyme catalyses dimethylallyl diphosphate + 2 oxidized [2Fe-2S]-[ferredoxin] + H2O = (2E)-4-hydroxy-3-methylbut-2-enyl diphosphate + 2 reduced [2Fe-2S]-[ferredoxin] + 2 H(+). It participates in isoprenoid biosynthesis; dimethylallyl diphosphate biosynthesis; dimethylallyl diphosphate from (2E)-4-hydroxy-3-methylbutenyl diphosphate: step 1/1. The protein operates within isoprenoid biosynthesis; isopentenyl diphosphate biosynthesis via DXP pathway; isopentenyl diphosphate from 1-deoxy-D-xylulose 5-phosphate: step 6/6. Catalyzes the conversion of 1-hydroxy-2-methyl-2-(E)-butenyl 4-diphosphate (HMBPP) into a mixture of isopentenyl diphosphate (IPP) and dimethylallyl diphosphate (DMAPP). Acts in the terminal step of the DOXP/MEP pathway for isoprenoid precursor biosynthesis. This Bacillus licheniformis (strain ATCC 14580 / DSM 13 / JCM 2505 / CCUG 7422 / NBRC 12200 / NCIMB 9375 / NCTC 10341 / NRRL NRS-1264 / Gibson 46) protein is 4-hydroxy-3-methylbut-2-enyl diphosphate reductase.